The following is a 324-amino-acid chain: Short chain dehydrogenase/reductase dmxR8 (324 aa).

L33, K58, D83, and N110 together coordinate NADP(+). S163 serves as the catalytic Proton donor. 2 residues coordinate NADP(+): Y200 and K204. Y200 (proton acceptor) is an active-site residue. K204 (lowers pKa of active site Tyr) is an active-site residue.

Belongs to the short-chain dehydrogenases/reductases (SDR) family.

Its pathway is secondary metabolite biosynthesis. In terms of biological role, short chain dehydrogenase; part of the gene cluster that mediates the biosynthesis of the dimeric xanthones cryptosporioptides. The pathway begins with the synthesis of atrochrysone thioester by the polyketide synthase dmx-nrPKS. The atrochrysone carboxyl ACP thioesterase dmxR1 then breaks the thioester bond and releases the atrochrysone carboxylic acid from dmx-nrPKS. Atrochrysone carboxylic acid is decarboxylated by the decarboxylase dmxR15, and oxidized by the anthrone oxygenase dmxR16 to yield emodin. Emodin is then reduced to emodin hydroquinone by the oxidoreductase dmxR7. A-ring reduction by the short chain dehydrogenase dmxR18, dehydration by the scytalone dehydratase-like protein dmxR17 and probable spontaneous re-oxidation, results in overall deoxygenation to chrysophanol. Baeyer-Villiger oxidation by the Baeyer-Villiger monooxygenase (BVMO) dmxR6 then yields monodictylactone in equilibrium with monodictyphenone. In the case of the cryptosporioptides biosynthesis, monodictylactone is reduced at C-12 to an alcohol (by the short chain dehydrogenases dmxR12 or dmxR8) and hydroxylated at C-5 by dmxR9, yielding the electron-rich aromatic which could eliminate H(2)O to form the ortho-quinonemethide, followed by tautomerisation to paraquinone and complete the formal reduction to produce the 10-methylgroup. Conjugate addition of C-4a-OH to the resulting paraquinone by the monooxygenase dmxR10 then gives cyclohexadienone, which is then reduced at C-5 by the short chain dehydrogenase dmxR3 to give the dihydroxanthone. The 6,7-epoxide in the cryptosporioptides could be introduced by the cytochrome P450 monooxygenase dmxL3. The highly reducing PKS dmxL2 manufactures butyrate, which is further carboxylated by dmxL1 to form ethylmalonate. It is not yet clear whether the carboxylation occurs while the butyrate is attached to the ACP of dmxL2, but this unusual fungal metabolite could then be esterified to O-5 by the O-acetyltransferase dmxR13. Finally, dimerization performed by dmxR5 gives the observed dimers cryptosporioptides A, B and C as the final products of the pathway. The chain is Short chain dehydrogenase/reductase dmxR8 from Cryptosporiopsis sp. (strain 8999).